The following is a 40-amino-acid chain: ATYNIKLITPEGTKEITCSDSEYILDAAEEKGLDLPYSCR.

The 2Fe-2S ferredoxin-type domain occupies 3–40; the sequence is YNIKLITPEGTKEITCSDSEYILDAAEEKGLDLPYSCR. Cys-39 lines the [2Fe-2S] cluster pocket.

This sequence belongs to the 2Fe2S plant-type ferredoxin family. The cofactor is [2Fe-2S] cluster.

The protein localises to the plastid. It localises to the chloroplast. Functionally, ferredoxins are iron-sulfur proteins that transfer electrons in a wide variety of metabolic reactions. The polypeptide is Ferredoxin-2 (Pisum sativum (Garden pea)).